Here is a 152-residue protein sequence, read N- to C-terminus: Large ribosomal subunit protein bL34c (152 aa).

The transit peptide at 1 to 91 (MATLSLLSTG…DRCRRFVVRA (91 aa)) directs the protein to the chloroplast.

Component of the chloroplast large ribosomal subunit (LSU). Mature 70S chloroplast ribosomes of higher plants consist of a small (30S) and a large (50S) subunit. The 30S small subunit contains 1 molecule of ribosomal RNA (16S rRNA) and 24 different proteins. The 50S large subunit contains 3 rRNA molecules (23S, 5S and 4.5S rRNA) and 33 different proteins.

Its subcellular location is the plastid. It is found in the chloroplast. Functionally, component of the chloroplast ribosome (chloro-ribosome), a dedicated translation machinery responsible for the synthesis of chloroplast genome-encoded proteins, including proteins of the transcription and translation machinery and components of the photosynthetic apparatus. This is Large ribosomal subunit protein bL34c (RPL34) from Spinacia oleracea (Spinach).